Consider the following 604-residue polypeptide: Threonine--tRNA ligase (604 aa).

The segment at 210 to 501 is catalytic; that stretch reads DHRKIGTEME…LTEHYAGEFP (292 aa). Cys302, His353, and His478 together coordinate Zn(2+).

It belongs to the class-II aminoacyl-tRNA synthetase family. As to quaternary structure, homodimer. The cofactor is Zn(2+).

Its subcellular location is the cytoplasm. It catalyses the reaction tRNA(Thr) + L-threonine + ATP = L-threonyl-tRNA(Thr) + AMP + diphosphate + H(+). Catalyzes the attachment of threonine to tRNA(Thr) in a two-step reaction: L-threonine is first activated by ATP to form Thr-AMP and then transferred to the acceptor end of tRNA(Thr). Also edits incorrectly charged L-seryl-tRNA(Thr). This is Threonine--tRNA ligase from Sulfurovum sp. (strain NBC37-1).